The chain runs to 22 residues: Proline-rich peptide (22 aa).

Residues 1 to 22 form a disordered region; sequence FVDRNRIPRSNNGPKIPIISNP.

The protein localises to the secreted. Its function is as follows. Antibacterial peptide active against Gram-positive bacterium M.luteus and Gram-negative bacterium E.coli. This chain is Proline-rich peptide, found in Calliphora vicina (Blue blowfly).